A 529-amino-acid chain; its full sequence is MAASPKIGIGIASVSSPHRVSAASSALSPPPHLFFLTTTTTTRHGGSYLLRQPTRTRSSDSLRLRVSATANSPSSSSSGGEIIENVVIIGSGPAGYTAAIYAARANLKPVVFEGYQMGGVPGGQLMTTTEVENFPGFPDGITGPDLMEKMRKQAERWGAELYPEDVESLSVTTAPFTVQTSERKVKCHSIIYATGATARRLRLPREEEFWSRGISACAICDGASPLFKGQVLAVVGGGDTATEEALYLTKYARHVHLLVRRDQLRASKAMQDRVINNPNITVHYNTETVDVLSNTKGQMSGILLRRLDTGEETELEAKGLFYGIGHSPNSQLLEGQVELDSSGYVLVREGTSNTSVEGVFAAGDVQDHEWRQAVTAAGSGCIAALSAERYLTSNNLLVEFHQPQTEEAKKEFTQRDVQEKFDITLTKHKGQYALRKLYHESPRVILVLYTSPTCGPCRTLKPILNKVVDEYNHDVHFVEIDIEEDQEIAEAAGIMGTPCVQFFKNKEMLRTISGVKMKKEYREFIEANK.

A chloroplast-targeting transit peptide spans 1-67; that stretch reads MAASPKIGIG…SSDSLRLRVS (67 aa). Positions 54 to 78 are disordered; that stretch reads TRTRSSDSLRLRVSATANSPSSSSS. Low complexity predominate over residues 64–78; the sequence is LRVSATANSPSSSSS. Residues 91 to 94, 113 to 120, N133, V166, and C220 each bind FAD; these read SGPA and EGYQMGGV. A disulfide bridge links C217 with C220. NADP(+) contacts are provided by T240, R265, I324, and Y344. FAD is bound by residues D364 and 371 to 374; that span reads RQAV. Residue R371 participates in NADP(+) binding. Residues 403-529 form the Thioredoxin domain; it reads PQTEEAKKEF…EYREFIEANK (127 aa). Residues C454 and C457 each act as nucleophile in the active site. C454 and C457 are disulfide-bonded.

The protein belongs to the class-II pyridine nucleotide-disulfide oxidoreductase family. In terms of assembly, may homodimerize. Interacts with the 2-Cys peroxiredoxin BAS1. The cofactor is FAD.

The protein resides in the plastid. The protein localises to the chloroplast. The catalysed reaction is [thioredoxin]-dithiol + NADP(+) = [thioredoxin]-disulfide + NADPH + H(+). Its function is as follows. Thioredoxin reductase (TR) that exhibits both TR and thioredoxin (Trx) activities. Contains a C-terminal functional Trx domain. Functions as an electron donor for plastidial 2-Cys peroxiredoxins and participates in a NADPH-dependent hydrogen peroxide scavenging system in chloroplasts in the dark. Required for chlorophyll biosynthesis and biogenesis of the photosynthetic apparatus. Activates aerobic cyclase which converts Mg-protoporhyrin monomethyl ester into protochlorophyllide. Involved in a light-dependent regulation of starch biosynthesis by redox activation of the ADP-glucose pyrophosphorylase (AGPase), a central enzyme of starch synthesis. In Arabidopsis thaliana (Mouse-ear cress), this protein is NADPH-dependent thioredoxin reductase 3.